The following is a 193-amino-acid chain: 7-methyl-GTP pyrophosphatase (193 aa).

Aspartate 68 functions as the Proton acceptor in the catalytic mechanism.

This sequence belongs to the Maf family. YceF subfamily. A divalent metal cation is required as a cofactor.

The protein resides in the cytoplasm. The enzyme catalyses N(7)-methyl-GTP + H2O = N(7)-methyl-GMP + diphosphate + H(+). Functionally, nucleoside triphosphate pyrophosphatase that hydrolyzes 7-methyl-GTP (m(7)GTP). May have a dual role in cell division arrest and in preventing the incorporation of modified nucleotides into cellular nucleic acids. The chain is 7-methyl-GTP pyrophosphatase from Chromobacterium violaceum (strain ATCC 12472 / DSM 30191 / JCM 1249 / CCUG 213 / NBRC 12614 / NCIMB 9131 / NCTC 9757 / MK).